The primary structure comprises 268 residues: Tryptophan synthase alpha chain (268 aa).

Active-site proton acceptor residues include glutamate 49 and aspartate 60.

Belongs to the TrpA family. In terms of assembly, tetramer of two alpha and two beta chains.

It catalyses the reaction (1S,2R)-1-C-(indol-3-yl)glycerol 3-phosphate + L-serine = D-glyceraldehyde 3-phosphate + L-tryptophan + H2O. It participates in amino-acid biosynthesis; L-tryptophan biosynthesis; L-tryptophan from chorismate: step 5/5. The alpha subunit is responsible for the aldol cleavage of indoleglycerol phosphate to indole and glyceraldehyde 3-phosphate. This is Tryptophan synthase alpha chain from Salmonella typhimurium (strain LT2 / SGSC1412 / ATCC 700720).